Reading from the N-terminus, the 309-residue chain is Probable lipid kinase YegS-like (309 aa).

The DAGKc domain maps to 1–134 (MAPSHWRLIL…IDLLRIDADH (134 aa)). Residues Thr39, 65 to 71 (GDGTLSE), and Thr96 each bind ATP. The Mg(2+) site is built by Leu219, Asp222, and Leu224. Catalysis depends on Glu280, which acts as the Proton acceptor.

The protein belongs to the diacylglycerol/lipid kinase family. YegS lipid kinase subfamily. It depends on Mg(2+) as a cofactor. Ca(2+) serves as cofactor.

The protein resides in the cytoplasm. Its function is as follows. Probably phosphorylates lipids; the in vivo substrate is unknown. In Xanthomonas campestris pv. campestris (strain 8004), this protein is Probable lipid kinase YegS-like.